The chain runs to 336 residues: MKLAIIGGDGIGPEVVAQAVKILDVVLPGVQKTTYDLGARRYHTTGELLPESVLAELREHDAILLGAVGDPSVPSGVLERGLLLRLRFELDHHINLRPARLYPGVNSLLAGKPDIDFVVVREGTEGPYTGTGGAIRVGTPNEVATEVSVNTAFGVRRVVQDAFERARQRRKHLTLVHKNNVLTYAGTLWCRIVQEVGEKYPDVEVVYQHIDAATIYLVTEPSRFDVIVTDNLFGDIITDLAAAVCGGIALAASGNIDATRTNPSMFEPVHGSAPDIAGQGIADPTAAIMSLALLLAHLGEDEPAARLDQAVASYLATRGNGRFSTGEVGERIAAAL.

4 residues coordinate substrate: R87, R97, R121, and D211. Positions 211, 235, and 239 each coordinate Mg(2+). Residue 271–283 (GSAPDIAGQGIAD) coordinates NAD(+).

The protein belongs to the isocitrate and isopropylmalate dehydrogenases family. LeuB type 2 subfamily. As to quaternary structure, homodimer. Mg(2+) is required as a cofactor. The cofactor is Mn(2+).

It is found in the cytoplasm. It carries out the reaction (2R,3S)-3-isopropylmalate + NAD(+) = 4-methyl-2-oxopentanoate + CO2 + NADH. Its pathway is amino-acid biosynthesis; L-leucine biosynthesis; L-leucine from 3-methyl-2-oxobutanoate: step 3/4. In terms of biological role, catalyzes the oxidation of 3-carboxy-2-hydroxy-4-methylpentanoate (3-isopropylmalate) to 3-carboxy-4-methyl-2-oxopentanoate. The product decarboxylates to 4-methyl-2 oxopentanoate. This Mycobacterium leprae (strain Br4923) protein is 3-isopropylmalate dehydrogenase.